The sequence spans 315 residues: Homocysteine S-methyltransferase YbgG (315 aa).

The 308-residue stretch at 2–309 (NPIQHILDTY…ENIQEIAAWA (308 aa)) folds into the Hcy-binding domain. 3 residues coordinate Zn(2+): C229, C294, and C295.

It depends on Zn(2+) as a cofactor.

The enzyme catalyses S-methyl-L-methionine + L-homocysteine = 2 L-methionine + H(+). The polypeptide is Homocysteine S-methyltransferase YbgG (ybgG) (Bacillus subtilis (strain 168)).